Here is a 187-residue protein sequence, read N- to C-terminus: Rusticyanin (187 aa).

A signal peptide spans Met-1–Ala-32. The region spanning Ser-85 to Lys-187 is the Plastocyanin-like domain. Cu cation contacts are provided by His-117, Cys-170, His-175, and Met-180.

In terms of assembly, monomer. Cu cation serves as cofactor.

Its subcellular location is the periplasm. Electron carrier from cytochrome c552 to the A-type oxidase. The chain is Rusticyanin (rus) from Acidithiobacillus ferridurans.